Consider the following 310-residue polypeptide: MKTLTRKLSRTAITLVLVILAFIAIFRAWVYYTESPWTRDARFSADVVAIAPDVAGLITHVNVHDNQLVKKDQVLFTIDQPRYQKALAEAEADVAYYQVLAQEKRQEAGRRNRLGVQAMSREEIDQANNVLQTVLHQLAKAQATRDLAKLDLERTVIRAPADGWVTNLNVYAGEFITRGSTAVALVKKNSFYVQAYMEETKLEGVRPGYRAEITPLGSNRVLKGTVDSVAAGVTNASSTSDAKGMATIDSNLEWVRLAQRVPVRIRLDEQQGNLWPAGTTATVVITGKQDRDASQDSFFRKLAHRLREFG.

Residues 12–32 traverse the membrane as a helical segment; that stretch reads AITLVLVILAFIAIFRAWVYY.

Belongs to the membrane fusion protein (MFP) (TC 8.A.1) family.

The protein localises to the cell inner membrane. Forms an efflux pump with AaeB. The polypeptide is p-hydroxybenzoic acid efflux pump subunit AaeA (Salmonella heidelberg (strain SL476)).